We begin with the raw amino-acid sequence, 175 residues long: Large ribosomal subunit protein uL10 (175 aa).

It belongs to the universal ribosomal protein uL10 family. As to quaternary structure, part of the ribosomal stalk of the 50S ribosomal subunit. The N-terminus interacts with L11 and the large rRNA to form the base of the stalk. The C-terminus forms an elongated spine to which L12 dimers bind in a sequential fashion forming a multimeric L10(L12)X complex.

Forms part of the ribosomal stalk, playing a central role in the interaction of the ribosome with GTP-bound translation factors. The protein is Large ribosomal subunit protein uL10 of Mycobacterium sp. (strain KMS).